The following is a 462-amino-acid chain: Aquaporin-1 (462 aa).

The segment covering 1-11 (MTMRSPLTNDH) has biased composition (polar residues). Positions 1–24 (MTMRSPLTNDHPQPLRASPLSEHD) are disordered. Over 1–146 (MTMRSPLTND…KWMNSDWKNH (146 aa)) the chain is Cytoplasmic. The helical transmembrane segment at 147–167 (IVAVIGELIGTSLFLFFGYAG) threads the bilayer. Topologically, residues 168–182 (IEVAKLQGREPPDLE) are extracellular. The chain crosses the membrane as a helical span at residues 183–203 (VLFYISATFGASLMVTAWIFF). Over 204–229 (RISGGLFNPAVTLALAILKAVSPIRA) the chain is Cytoplasmic. Residues 211–213 (NPA) carry the NPA 1 motif. A helical membrane pass occupies residues 230 to 250 (FLLVITQLGASCLAAILVQEI). The Extracellular segment spans residues 251-269 (FPKQLDVATTLGSGTSMGQ). Residues 270–290 (GFVIEAITTAALIFTIIMLAV) form a helical membrane-spanning segment. Residues 291–296 (EKHKAT) lie on the Cytoplasmic side of the membrane. A helical transmembrane segment spans residues 297 to 317 (FVAPIGIGLALFVAHMVAVPF). At 318–341 (TGASLNPARSFGPSAIVWNFPREH) the chain is on the extracellular side. The NPA 2 signature appears at 323-325 (NPA). The chain crosses the membrane as a helical span at residues 342-362 (WIYWVGPILGAGLAVLFFRLI). The Cytoplasmic segment spans residues 363 to 462 (KLMEYEMANP…WRRQQYRNVV (100 aa)). The interval 407 to 433 (GKSWYRDDSSSGSMRRKESVNSFTGGR) is disordered. Residues 410 to 425 (WYRDDSSSGSMRRKES) are compositionally biased toward basic and acidic residues.

It belongs to the MIP/aquaporin (TC 1.A.8) family.

It is found in the membrane. The enzyme catalyses H2O(in) = H2O(out). Water channel required to facilitate the transport of water across membranes. Involved in conidiation. This chain is Aquaporin-1, found in Botryotinia fuckeliana (strain B05.10) (Noble rot fungus).